The sequence spans 361 residues: MNQTLAAQFLTRDQVTNFVVHEGNGVKGLSETGIKVLPDQYIQPFEERLINFHVKEDSDESIPVIDISNLDEKSVSKAVCDAAEEWGFFQVINHGVSMEVLENMKTATHRFFGLPVEEKRKFSREKSLSTNVRFGTSFSPHAEKALEWKDYLSLFFVSEAEASQLWPDSCRSETLEYMNETKPLVKKLLRFLGENLNVKELDKTKESFFMGSTRINLNYYPICPNPELTVGVGRHSDVSSLTILLQDEIGGLHVRSLTTGRWVHVPPISGSLVINIGDAMQIMSNGRYKSVEHRVLANGSYNRISVPIFVSPKPESVIGPLLEVIENGEKPVYKDILYTDYVKHFFRKAHDGKKTIDFANI.

In terms of domain architecture, Fe2OG dioxygenase spans 211–312 (GSTRINLNYY…RISVPIFVSP (102 aa)). Tyr-220 contributes to the 2-oxoglutarate binding site. Fe cation contacts are provided by His-235, Asp-237, and His-293. 2-oxoglutarate contacts are provided by Arg-303 and Ser-305.

Belongs to the iron/ascorbate-dependent oxidoreductase family. L-ascorbate is required as a cofactor. The cofactor is Fe(2+). Low expression in roots.

It catalyses the reaction (E)-feruloyl-CoA + 2-oxoglutarate + O2 = (E)-6-hydroxyferuloyl-CoA + succinate + CO2. It carries out the reaction (E)-6-hydroxyferuloyl-CoA = scopoletin + CoA. Functionally, 2-oxoglutarate (OG)- and Fe(II)-dependent dioxygenase (2OGD)involved in scopoletin biosynthesis. Converts feruloyl CoA into 6'-hydroxyferuloyl CoA but has no activity with ferulic acid, feruloylquinic acid, caffeic acid, caffeoyl CoA, p-coumaric acid, cinnamic acid, cinnamoyl CoA or benzoyl CoA. This chain is Feruloyl CoA ortho-hydroxylase 2, found in Arabidopsis thaliana (Mouse-ear cress).